The chain runs to 905 residues: DNA gyrase subunit A (905 aa).

One can recognise a Topo IIA-type catalytic domain in the interval 35–524; it reads IPDVRDGLKP…GEFDQDIEDL (490 aa). The active-site O-(5'-phospho-DNA)-tyrosine intermediate is the tyrosine 123. The short motif at 551-557 is the GyrA-box element; it reads QKRGGKG. Residues 882–905 form a disordered region; sequence IAESSDDNEEDSEFEEEVAEEGSE. The span at 885-905 shows a compositional bias: acidic residues; that stretch reads SSDDNEEDSEFEEEVAEEGSE.

The protein belongs to the type II topoisomerase GyrA/ParC subunit family. As to quaternary structure, heterotetramer, composed of two GyrA and two GyrB chains. In the heterotetramer, GyrA contains the active site tyrosine that forms a transient covalent intermediate with DNA, while GyrB binds cofactors and catalyzes ATP hydrolysis.

The protein localises to the cytoplasm. The catalysed reaction is ATP-dependent breakage, passage and rejoining of double-stranded DNA.. Its function is as follows. A type II topoisomerase that negatively supercoils closed circular double-stranded (ds) DNA in an ATP-dependent manner to modulate DNA topology and maintain chromosomes in an underwound state. Negative supercoiling favors strand separation, and DNA replication, transcription, recombination and repair, all of which involve strand separation. Also able to catalyze the interconversion of other topological isomers of dsDNA rings, including catenanes and knotted rings. Type II topoisomerases break and join 2 DNA strands simultaneously in an ATP-dependent manner. This is DNA gyrase subunit A from Rickettsia bellii (strain RML369-C).